We begin with the raw amino-acid sequence, 260 residues long: Imidazole glycerol phosphate synthase subunit HisF (260 aa).

Residues D12 and D131 contribute to the active site.

This sequence belongs to the HisA/HisF family. In terms of assembly, heterodimer of HisH and HisF.

The protein localises to the cytoplasm. The catalysed reaction is 5-[(5-phospho-1-deoxy-D-ribulos-1-ylimino)methylamino]-1-(5-phospho-beta-D-ribosyl)imidazole-4-carboxamide + L-glutamine = D-erythro-1-(imidazol-4-yl)glycerol 3-phosphate + 5-amino-1-(5-phospho-beta-D-ribosyl)imidazole-4-carboxamide + L-glutamate + H(+). It participates in amino-acid biosynthesis; L-histidine biosynthesis; L-histidine from 5-phospho-alpha-D-ribose 1-diphosphate: step 5/9. Its function is as follows. IGPS catalyzes the conversion of PRFAR and glutamine to IGP, AICAR and glutamate. The HisF subunit catalyzes the cyclization activity that produces IGP and AICAR from PRFAR using the ammonia provided by the HisH subunit. The protein is Imidazole glycerol phosphate synthase subunit HisF of Corynebacterium jeikeium (strain K411).